Consider the following 473-residue polypeptide: Photosystem II CP43 reaction center protein (473 aa).

Residues Met-1–Glu-14 constitute a propeptide that is removed on maturation. Thr-15 is modified (N-acetylthreonine). Position 15 is a phosphothreonine (Thr-15). The next 5 membrane-spanning stretches (helical) occupy residues Leu-69–Ala-93, Leu-134–Asn-155, Lys-178–Thr-200, Lys-255–Ser-275, and Trp-291–Ala-312. Glu-367 provides a ligand contact to [CaMn4O5] cluster. Residues Arg-447 to Pro-471 traverse the membrane as a helical segment.

Belongs to the PsbB/PsbC family. PsbC subfamily. In terms of assembly, PSII is composed of 1 copy each of membrane proteins PsbA, PsbB, PsbC, PsbD, PsbE, PsbF, PsbH, PsbI, PsbJ, PsbK, PsbL, PsbM, PsbT, PsbX, PsbY, PsbZ, Psb30/Ycf12, at least 3 peripheral proteins of the oxygen-evolving complex and a large number of cofactors. It forms dimeric complexes. Binds multiple chlorophylls and provides some of the ligands for the Ca-4Mn-5O cluster of the oxygen-evolving complex. It may also provide a ligand for a Cl- that is required for oxygen evolution. PSII binds additional chlorophylls, carotenoids and specific lipids. serves as cofactor.

Its subcellular location is the plastid. It localises to the chloroplast thylakoid membrane. In terms of biological role, one of the components of the core complex of photosystem II (PSII). It binds chlorophyll and helps catalyze the primary light-induced photochemical processes of PSII. PSII is a light-driven water:plastoquinone oxidoreductase, using light energy to abstract electrons from H(2)O, generating O(2) and a proton gradient subsequently used for ATP formation. The sequence is that of Photosystem II CP43 reaction center protein from Vitis vinifera (Grape).